Here is a 67-residue protein sequence, read N- to C-terminus: Small ribosomal subunit protein eS17 (67 aa).

The protein belongs to the eukaryotic ribosomal protein eS17 family. In terms of assembly, part of the 30S ribosomal subunit.

This is Small ribosomal subunit protein eS17 from Pyrococcus furiosus (strain ATCC 43587 / DSM 3638 / JCM 8422 / Vc1).